Here is a 122-residue protein sequence, read N- to C-terminus: Ribonuclease P protein component (122 aa).

This sequence belongs to the RnpA family. Consists of a catalytic RNA component (M1 or rnpB) and a protein subunit.

The catalysed reaction is Endonucleolytic cleavage of RNA, removing 5'-extranucleotides from tRNA precursor.. In terms of biological role, RNaseP catalyzes the removal of the 5'-leader sequence from pre-tRNA to produce the mature 5'-terminus. It can also cleave other RNA substrates such as 4.5S RNA. The protein component plays an auxiliary but essential role in vivo by binding to the 5'-leader sequence and broadening the substrate specificity of the ribozyme. This chain is Ribonuclease P protein component, found in Roseiflexus castenholzii (strain DSM 13941 / HLO8).